A 540-amino-acid polypeptide reads, in one-letter code: Chaperonin GroEL (540 aa).

ATP-binding positions include 29 to 32 (TLGP), 86 to 90 (DGTTT), Gly-413, 477 to 479 (DAL), and Asp-493.

Belongs to the chaperonin (HSP60) family. In terms of assembly, forms a cylinder of 14 subunits composed of two heptameric rings stacked back-to-back. Interacts with the co-chaperonin GroES.

It is found in the cytoplasm. The catalysed reaction is ATP + H2O + a folded polypeptide = ADP + phosphate + an unfolded polypeptide.. In terms of biological role, together with its co-chaperonin GroES, plays an essential role in assisting protein folding. The GroEL-GroES system forms a nano-cage that allows encapsulation of the non-native substrate proteins and provides a physical environment optimized to promote and accelerate protein folding. The polypeptide is Chaperonin GroEL (Clostridium botulinum (strain Eklund 17B / Type B)).